Reading from the N-terminus, the 419-residue chain is Maltoporin 2 (419 aa).

The first 23 residues, 1–23, serve as a signal peptide directing secretion; the sequence is MKTSLRTLSVALAAALVSPSVLA.

The protein belongs to the porin LamB (TC 1.B.3) family. Homotrimer formed of three 18-stranded antiparallel beta-barrels, containing three independent channels.

The protein resides in the cell outer membrane. The catalysed reaction is beta-maltose(in) = beta-maltose(out). In terms of biological role, involved in the transport of maltose and maltodextrins. In Yersinia pseudotuberculosis serotype O:1b (strain IP 31758), this protein is Maltoporin 2.